A 307-amino-acid polypeptide reads, in one-letter code: Holliday junction branch migration complex subunit RuvB (307 aa).

The interval 1–167 (MKLQIKPPNT…FGVILNINYY (167 aa)) is large ATPase domain (RuvB-L). Ile-5, Gly-48, Lys-51, Thr-52, Thr-53, Arg-157, Tyr-167, and Arg-204 together coordinate ATP. Thr-52 is a Mg(2+) binding site. A small ATPAse domain (RuvB-S) region spans residues 168-233 (SNAEIEKMVS…DLEGLFKNLM (66 aa)). A head domain (RuvB-H) region spans residues 236–307 (KNGLQSIDVQ…NSGREYLVNF (72 aa)). Positions 270, 289, and 294 each coordinate DNA.

Belongs to the RuvB family. Homohexamer. Forms an RuvA(8)-RuvB(12)-Holliday junction (HJ) complex. HJ DNA is sandwiched between 2 RuvA tetramers; dsDNA enters through RuvA and exits via RuvB. An RuvB hexamer assembles on each DNA strand where it exits the tetramer. Each RuvB hexamer is contacted by two RuvA subunits (via domain III) on 2 adjacent RuvB subunits; this complex drives branch migration. In the full resolvosome a probable DNA-RuvA(4)-RuvB(12)-RuvC(2) complex forms which resolves the HJ.

The protein resides in the cytoplasm. It carries out the reaction ATP + H2O = ADP + phosphate + H(+). Its function is as follows. The RuvA-RuvB-RuvC complex processes Holliday junction (HJ) DNA during genetic recombination and DNA repair, while the RuvA-RuvB complex plays an important role in the rescue of blocked DNA replication forks via replication fork reversal (RFR). RuvA specifically binds to HJ cruciform DNA, conferring on it an open structure. The RuvB hexamer acts as an ATP-dependent pump, pulling dsDNA into and through the RuvAB complex. RuvB forms 2 homohexamers on either side of HJ DNA bound by 1 or 2 RuvA tetramers; 4 subunits per hexamer contact DNA at a time. Coordinated motions by a converter formed by DNA-disengaged RuvB subunits stimulates ATP hydrolysis and nucleotide exchange. Immobilization of the converter enables RuvB to convert the ATP-contained energy into a lever motion, pulling 2 nucleotides of DNA out of the RuvA tetramer per ATP hydrolyzed, thus driving DNA branch migration. The RuvB motors rotate together with the DNA substrate, which together with the progressing nucleotide cycle form the mechanistic basis for DNA recombination by continuous HJ branch migration. Branch migration allows RuvC to scan DNA until it finds its consensus sequence, where it cleaves and resolves cruciform DNA. The polypeptide is Holliday junction branch migration complex subunit RuvB (Mycoplasma genitalium (strain ATCC 33530 / DSM 19775 / NCTC 10195 / G37) (Mycoplasmoides genitalium)).